Reading from the N-terminus, the 575-residue chain is Probable cytochrome P450 514A1 (575 aa).

The chain crosses the membrane as a helical span at residues 4–24 (IFTIILTITILVLSLILKDLL). C448 is a heme binding site.

The protein belongs to the cytochrome P450 family. Heme serves as cofactor.

It localises to the membrane. The polypeptide is Probable cytochrome P450 514A1 (cyp514A1) (Dictyostelium discoideum (Social amoeba)).